The primary structure comprises 30 residues: Dermaseptin-DI4 (30 aa).

As to expression, expressed by the skin glands.

The protein resides in the secreted. Its function is as follows. Antibacterial activity against Gram-positive bacteria S.aureus and E.faecalis, and Gram-negative bacteria P.aeruginosa and E.coli. The protein is Dermaseptin-DI4 of Phyllomedusa distincta (Monkey frog).